The sequence spans 54 residues: Rubredoxin-1 (54 aa).

The Rubredoxin-like domain maps to Met1–Val52. 4 residues coordinate Fe cation: Cys6, Cys9, Cys39, and Cys42.

It belongs to the rubredoxin family. Requires Fe(3+) as cofactor.

The protein localises to the cytoplasm. Its pathway is hydrocarbon metabolism; alkane degradation. Functionally, involved in the hydrocarbon hydroxylating system, which transfers electrons from NADH to rubredoxin reductase and then through rubredoxin to alkane 1 monooxygenase. This chain is Rubredoxin-1 (rubA), found in Alcanivorax borkumensis (strain ATCC 700651 / DSM 11573 / NCIMB 13689 / SK2).